We begin with the raw amino-acid sequence, 181 residues long: Early upstream open reading frame (181 aa).

Belongs to the EUO family.

The sequence is that of Early upstream open reading frame from Chlamydia caviae (strain ATCC VR-813 / DSM 19441 / 03DC25 / GPIC) (Chlamydophila caviae).